Consider the following 162-residue polypeptide: NADH-quinone oxidoreductase subunit I (162 aa).

2 consecutive 4Fe-4S ferredoxin-type domains span residues 52–82 (LRRYPNGEERCIACKLCEAICPAQAITIEAG) and 93–122 (TRYDIDMVKCIYCGFCQEACPVDAIVEGPN). [4Fe-4S] cluster contacts are provided by cysteine 62, cysteine 65, cysteine 68, cysteine 72, cysteine 102, cysteine 105, cysteine 108, and cysteine 112.

It belongs to the complex I 23 kDa subunit family. NDH-1 is composed of 14 different subunits. Subunits NuoA, H, J, K, L, M, N constitute the membrane sector of the complex. The cofactor is [4Fe-4S] cluster.

The protein resides in the cell inner membrane. The catalysed reaction is a quinone + NADH + 5 H(+)(in) = a quinol + NAD(+) + 4 H(+)(out). Its function is as follows. NDH-1 shuttles electrons from NADH, via FMN and iron-sulfur (Fe-S) centers, to quinones in the respiratory chain. The immediate electron acceptor for the enzyme in this species is believed to be ubiquinone. Couples the redox reaction to proton translocation (for every two electrons transferred, four hydrogen ions are translocated across the cytoplasmic membrane), and thus conserves the redox energy in a proton gradient. This Xanthobacter autotrophicus (strain ATCC BAA-1158 / Py2) protein is NADH-quinone oxidoreductase subunit I.